The sequence spans 490 residues: Cyclin-A2-1 (490 aa).

The interval 34–76 is disordered; it reads FAPSVSLPARTERKQTAKGKTKRGALDEITSASTATSAPQPKR. Residues 63 to 72 show a composition bias toward polar residues; the sequence is TSASTATSAP.

It belongs to the cyclin family. Cyclin AB subfamily.

This is Cyclin-A2-1 (CYCA2-1) from Oryza sativa subsp. japonica (Rice).